The following is a 143-amino-acid chain: Transcriptional regulator MraZ (143 aa).

2 consecutive SpoVT-AbrB domains span residues 5–47 (TYTP…PKEE) and 76–119 (TDEQ…DKQA).

This sequence belongs to the MraZ family. Forms oligomers.

The protein localises to the cytoplasm. The protein resides in the nucleoid. In Nocardia farcinica (strain IFM 10152), this protein is Transcriptional regulator MraZ.